The chain runs to 375 residues: Queuine tRNA-ribosyltransferase (375 aa).

Aspartate 93 acts as the Proton acceptor in catalysis. Substrate contacts are provided by residues 93 to 97 (DSGGY), aspartate 147, glutamine 194, and glycine 221. Positions 252-258 (GVGKPDD) are RNA binding. Aspartate 271 serves as the catalytic Nucleophile. An RNA binding; important for wobble base 34 recognition region spans residues 276-280 (TRSGR). Residues cysteine 309, cysteine 311, cysteine 314, and histidine 340 each contribute to the Zn(2+) site.

It belongs to the queuine tRNA-ribosyltransferase family. As to quaternary structure, homodimer. Within each dimer, one monomer is responsible for RNA recognition and catalysis, while the other monomer binds to the replacement base PreQ1. Requires Zn(2+) as cofactor.

It carries out the reaction 7-aminomethyl-7-carbaguanine + guanosine(34) in tRNA = 7-aminomethyl-7-carbaguanosine(34) in tRNA + guanine. Its pathway is tRNA modification; tRNA-queuosine biosynthesis. In terms of biological role, catalyzes the base-exchange of a guanine (G) residue with the queuine precursor 7-aminomethyl-7-deazaguanine (PreQ1) at position 34 (anticodon wobble position) in tRNAs with GU(N) anticodons (tRNA-Asp, -Asn, -His and -Tyr). Catalysis occurs through a double-displacement mechanism. The nucleophile active site attacks the C1' of nucleotide 34 to detach the guanine base from the RNA, forming a covalent enzyme-RNA intermediate. The proton acceptor active site deprotonates the incoming PreQ1, allowing a nucleophilic attack on the C1' of the ribose to form the product. After dissociation, two additional enzymatic reactions on the tRNA convert PreQ1 to queuine (Q), resulting in the hypermodified nucleoside queuosine (7-(((4,5-cis-dihydroxy-2-cyclopenten-1-yl)amino)methyl)-7-deazaguanosine). The sequence is that of Queuine tRNA-ribosyltransferase from Sphingopyxis alaskensis (strain DSM 13593 / LMG 18877 / RB2256) (Sphingomonas alaskensis).